The chain runs to 276 residues: NH(3)-dependent NAD(+) synthetase (276 aa).

Glycine 43 to serine 50 is a binding site for ATP. Residue aspartate 49 participates in Mg(2+) binding. Deamido-NAD(+) is bound at residue arginine 146. Threonine 166 lines the ATP pocket. A Mg(2+)-binding site is contributed by glutamate 171. Positions 179 and 186 each coordinate deamido-NAD(+). Residues lysine 195 and threonine 217 each contribute to the ATP site. Histidine 266 to lysine 267 serves as a coordination point for deamido-NAD(+).

It belongs to the NAD synthetase family. Homodimer.

The enzyme catalyses deamido-NAD(+) + NH4(+) + ATP = AMP + diphosphate + NAD(+) + H(+). Its pathway is cofactor biosynthesis; NAD(+) biosynthesis; NAD(+) from deamido-NAD(+) (ammonia route): step 1/1. Catalyzes the ATP-dependent amidation of deamido-NAD to form NAD. Uses ammonia as a nitrogen source. The sequence is that of NH(3)-dependent NAD(+) synthetase from Shewanella pealeana (strain ATCC 700345 / ANG-SQ1).